The sequence spans 476 residues: 3-isopropylmalate dehydratase large subunit (476 aa).

Cysteine 353, cysteine 413, and cysteine 416 together coordinate [4Fe-4S] cluster.

This sequence belongs to the aconitase/IPM isomerase family. LeuC type 1 subfamily. As to quaternary structure, heterodimer of LeuC and LeuD. Requires [4Fe-4S] cluster as cofactor.

The catalysed reaction is (2R,3S)-3-isopropylmalate = (2S)-2-isopropylmalate. The protein operates within amino-acid biosynthesis; L-leucine biosynthesis; L-leucine from 3-methyl-2-oxobutanoate: step 2/4. Its function is as follows. Catalyzes the isomerization between 2-isopropylmalate and 3-isopropylmalate, via the formation of 2-isopropylmaleate. The protein is 3-isopropylmalate dehydratase large subunit of Photobacterium profundum (strain SS9).